Reading from the N-terminus, the 182-residue chain is MSQLDSAQLPNEANEVGEDGCYVGLTHDKLDVQRTMDRVRSPEAGAIVVFVGTTRNSFDGKPVKELNYTAYNPMALRTMISICKAMKTKHGLKGIAMVHRLGVVPISEDSIVIAVSSPHRQAAWRAGEEALEECKAKVEVWKREEFEGGEGVWRANRDGAPGQRIDTAEPAVGAGSGGEIDD.

Substrate is bound by residues His119 to Arg120, Lys135, and Lys142 to Glu144. Positions Val152–Asp182 are disordered.

The protein belongs to the MoaE family. MOCS2B subfamily. Heterotetramer; composed of 2 small (MOCS2A) and 2 large (MOCS2B) subunits.

It is found in the cytoplasm. It catalyses the reaction 2 [molybdopterin-synthase sulfur-carrier protein]-C-terminal-Gly-aminoethanethioate + cyclic pyranopterin phosphate + H2O = molybdopterin + 2 [molybdopterin-synthase sulfur-carrier protein]-C-terminal Gly-Gly + 2 H(+). It participates in cofactor biosynthesis; molybdopterin biosynthesis. Functionally, catalytic subunit of the molybdopterin synthase complex, a complex that catalyzes the conversion of precursor Z into molybdopterin. Acts by mediating the incorporation of 2 sulfur atoms from thiocarboxylated MOCS2A into precursor Z to generate a dithiolene group. The sequence is that of Molybdopterin synthase catalytic subunit from Pyricularia oryzae (strain 70-15 / ATCC MYA-4617 / FGSC 8958) (Rice blast fungus).